The following is a 416-amino-acid chain: Gamma-glutamyl phosphate reductase (416 aa).

It belongs to the gamma-glutamyl phosphate reductase family.

The protein localises to the cytoplasm. It catalyses the reaction L-glutamate 5-semialdehyde + phosphate + NADP(+) = L-glutamyl 5-phosphate + NADPH + H(+). Its pathway is amino-acid biosynthesis; L-proline biosynthesis; L-glutamate 5-semialdehyde from L-glutamate: step 2/2. Its function is as follows. Catalyzes the NADPH-dependent reduction of L-glutamate 5-phosphate into L-glutamate 5-semialdehyde and phosphate. The product spontaneously undergoes cyclization to form 1-pyrroline-5-carboxylate. The chain is Gamma-glutamyl phosphate reductase from Leptospira interrogans serogroup Icterohaemorrhagiae serovar copenhageni (strain Fiocruz L1-130).